Reading from the N-terminus, the 553-residue chain is Thermosome subunit beta (553 aa).

A disordered region spans residues 534-553; sequence KKSEGKTGEKKESEKGKEED.

It belongs to the TCP-1 chaperonin family. As to quaternary structure, forms a Heterooligomeric complex of two stacked eight-membered rings.

In terms of biological role, molecular chaperone; binds unfolded polypeptides in vitro, and has a weak ATPase activity. This is Thermosome subunit beta (thsB) from Sulfolobus acidocaldarius (strain ATCC 33909 / DSM 639 / JCM 8929 / NBRC 15157 / NCIMB 11770).